The sequence spans 674 residues: Amino-acid acetyltransferase, mitochondrial (674 aa).

The N-terminal 50 residues, 1 to 50 (MPLVAAMLTRSNGAWKKATSVVQASICRDQQRPNHTTITSVTSVSQRRHF), are a transit peptide targeting the mitochondrion. The segment covering 33 to 45 (PNHTTITSVTSVS) has biased composition (polar residues). The segment at 33–74 (PNHTTITSVTSVSQRRHFSSAENGAKPSRSHPSAAEAKQKRE) is disordered. Residues 497-665 (GTPRLKLTDT…YEDVCRGVVP (169 aa)) enclose the N-acetyltransferase domain.

It belongs to the acetyltransferase family.

Its subcellular location is the mitochondrion. It carries out the reaction L-glutamate + acetyl-CoA = N-acetyl-L-glutamate + CoA + H(+). It participates in amino-acid biosynthesis; L-arginine biosynthesis; N(2)-acetyl-L-ornithine from L-glutamate: step 1/4. N-acetylglutamate synthase involved in arginine biosynthesis. This chain is Amino-acid acetyltransferase, mitochondrial (ARG2), found in Podospora anserina (strain S / ATCC MYA-4624 / DSM 980 / FGSC 10383) (Pleurage anserina).